We begin with the raw amino-acid sequence, 353 residues long: 3-isopropylmalate dehydrogenase (353 aa).

Residue 75–88 participates in NAD(+) binding; sequence GPKWENLPHEHKPE. Residues arginine 95, arginine 105, arginine 133, and aspartate 219 each contribute to the substrate site. The Mg(2+) site is built by aspartate 219, aspartate 243, and aspartate 247. An NAD(+)-binding site is contributed by 276-288; it reads GSAPDIAGKNIAN.

It belongs to the isocitrate and isopropylmalate dehydrogenases family. LeuB type 1 subfamily. Homodimer. Mg(2+) is required as a cofactor. The cofactor is Mn(2+).

The protein localises to the cytoplasm. The catalysed reaction is (2R,3S)-3-isopropylmalate + NAD(+) = 4-methyl-2-oxopentanoate + CO2 + NADH. Its pathway is amino-acid biosynthesis; L-leucine biosynthesis; L-leucine from 3-methyl-2-oxobutanoate: step 3/4. In terms of biological role, catalyzes the oxidation of 3-carboxy-2-hydroxy-4-methylpentanoate (3-isopropylmalate) to 3-carboxy-4-methyl-2-oxopentanoate. The product decarboxylates to 4-methyl-2 oxopentanoate. The sequence is that of 3-isopropylmalate dehydrogenase from Chlorobium luteolum (strain DSM 273 / BCRC 81028 / 2530) (Pelodictyon luteolum).